The primary structure comprises 155 residues: uncharacterized protein (155 aa).

The 148-residue stretch at 7–154 (LQINYKTLEE…VWLPESVELQ (148 aa)) folds into the N-acetyltransferase domain.

This is an uncharacterized protein from Brevibacillus brevis (strain 47 / JCM 6285 / NBRC 100599).